A 245-amino-acid polypeptide reads, in one-letter code: NAD-dependent protein deacetylase (245 aa).

In terms of domain architecture, Deacetylase sirtuin-type spans 1-245; it reads MLLLDKINEL…SIGKVLETVI (245 aa). Residues Ala-26, Thr-30, Phe-37, Arg-38, Gln-107, Ile-109, Asp-110, and His-125 each contribute to the NAD(+) site. Phe-37 serves as a coordination point for nicotinamide. The nicotinamide site is built by Ile-109 and Asp-110. The active-site Proton acceptor is His-125. Positions 133, 136, 155, and 158 each coordinate Zn(2+). 4 residues coordinate NAD(+): Thr-196, Ser-197, Asn-219, and Ile-237.

Belongs to the sirtuin family. Class U subfamily. It depends on Zn(2+) as a cofactor.

It localises to the cytoplasm. It carries out the reaction N(6)-acetyl-L-lysyl-[protein] + NAD(+) + H2O = 2''-O-acetyl-ADP-D-ribose + nicotinamide + L-lysyl-[protein]. NAD-dependent protein deacetylase which modulates the activities of several enzymes which are inactive in their acetylated form. The sequence is that of NAD-dependent protein deacetylase from Clostridium acetobutylicum (strain ATCC 824 / DSM 792 / JCM 1419 / IAM 19013 / LMG 5710 / NBRC 13948 / NRRL B-527 / VKM B-1787 / 2291 / W).